The sequence spans 334 residues: Tryptophan--tRNA ligase (334 aa).

ATP contacts are provided by residues 11 to 13 (QPS) and 19 to 20 (GN). A 'HIGH' region motif is present at residues 12–20 (PSGELTIGN). D135 is an L-tryptophan binding site. ATP is bound by residues 147–149 (GED), V186, and 195–199 (KMSKS). The 'KMSKS' region signature appears at 195–199 (KMSKS).

Belongs to the class-I aminoacyl-tRNA synthetase family. As to quaternary structure, homodimer.

The protein resides in the cytoplasm. It carries out the reaction tRNA(Trp) + L-tryptophan + ATP = L-tryptophyl-tRNA(Trp) + AMP + diphosphate + H(+). Functionally, catalyzes the attachment of tryptophan to tRNA(Trp). Amino acylates tRNA(Trp) with both L- and D-tryptophan, although D-tryptophan is a poor substrate. The protein is Tryptophan--tRNA ligase of Escherichia coli (strain K12).